Consider the following 78-residue polypeptide: Small ribosomal subunit protein bS18 (78 aa).

Belongs to the bacterial ribosomal protein bS18 family. As to quaternary structure, part of the 30S ribosomal subunit. Forms a tight heterodimer with protein bS6.

Functionally, binds as a heterodimer with protein bS6 to the central domain of the 16S rRNA, where it helps stabilize the platform of the 30S subunit. This chain is Small ribosomal subunit protein bS18, found in Parafrankia sp. (strain EAN1pec).